The following is a 576-amino-acid chain: Proline--tRNA ligase (576 aa).

The protein belongs to the class-II aminoacyl-tRNA synthetase family. ProS type 1 subfamily. As to quaternary structure, homodimer.

The protein localises to the cytoplasm. It catalyses the reaction tRNA(Pro) + L-proline + ATP = L-prolyl-tRNA(Pro) + AMP + diphosphate. Its function is as follows. Catalyzes the attachment of proline to tRNA(Pro) in a two-step reaction: proline is first activated by ATP to form Pro-AMP and then transferred to the acceptor end of tRNA(Pro). As ProRS can inadvertently accommodate and process non-cognate amino acids such as alanine and cysteine, to avoid such errors it has two additional distinct editing activities against alanine. One activity is designated as 'pretransfer' editing and involves the tRNA(Pro)-independent hydrolysis of activated Ala-AMP. The other activity is designated 'posttransfer' editing and involves deacylation of mischarged Ala-tRNA(Pro). The misacylated Cys-tRNA(Pro) is not edited by ProRS. This chain is Proline--tRNA ligase, found in Bordetella petrii (strain ATCC BAA-461 / DSM 12804 / CCUG 43448).